The sequence spans 319 residues: Putative G-protein coupled receptor B0244.7 (319 aa).

N28 carries N-linked (GlcNAc...) asparagine glycosylation. The next 6 membrane-spanning stretches (helical) occupy residues 49–69, 107–127, 131–151, 166–186, 206–226, and 261–281; these read AIFI…IYIF, LPVI…FIIF, SFLS…IAVV, VLLI…CGIV, GPVL…CLVI, and LFAG…SAII.

This sequence belongs to the G-protein coupled receptor 1 family. B0244 subfamily.

The protein localises to the cell membrane. The polypeptide is Putative G-protein coupled receptor B0244.7 (Caenorhabditis elegans).